A 69-amino-acid polypeptide reads, in one-letter code: Cytochrome c oxidase copper chaperone (69 aa).

Cu cation is bound by residues C23 and C24. A CHCH domain is found at 23-65 (CCVCKPEKEERDTCILFNGQDSEKCKEFIEKYKECMKGYGFEV). 2 consecutive short sequence motifs (cx9C motif) follow at residues 26–36 (CKPEKEERDTC) and 47–57 (CKEFIEKYKEC). Intrachain disulfides connect C26-C57 and C36-C47.

It belongs to the COX17 family.

The protein resides in the mitochondrion intermembrane space. Copper chaperone for cytochrome c oxidase (COX). Binds two copper ions and deliver them to the Cu(A) site of COX. The polypeptide is Cytochrome c oxidase copper chaperone (COX17) (Saccharomyces cerevisiae (strain ATCC 204508 / S288c) (Baker's yeast)).